The following is a 93-amino-acid chain: Large ribosomal subunit protein eL37A (93 aa).

4 residues coordinate Zn(2+): Cys-19, Cys-22, Cys-34, and Cys-37. A C4-type zinc finger spans residues 19-37 (CRRCGRSSYHIQKSTCAQC).

It belongs to the eukaryotic ribosomal protein eL37 family. Zn(2+) is required as a cofactor.

Binds to the 23S rRNA. The chain is Large ribosomal subunit protein eL37A from Drosophila melanogaster (Fruit fly).